The primary structure comprises 915 residues: Protein translocase subunit SecA (915 aa).

Residues glutamine 87, 105-109, and aspartate 512 each bind ATP; that span reads GEGKT. Low complexity predominate over residues 849–864; sequence AAQQQARQAPLPNAPA. The disordered stretch occupies residues 849–915; that stretch reads AAQQQARQAP…CHGSRAKDHA (67 aa). The segment covering 876-891 has biased composition (basic and acidic residues); that stretch reads PEEKVARVAAERHIGR. Zn(2+) is bound by residues cysteine 895, cysteine 897, cysteine 906, and histidine 907.

Belongs to the SecA family. In terms of assembly, monomer and homodimer. Part of the essential Sec protein translocation apparatus which comprises SecA, SecYEG and auxiliary proteins SecDF-YajC and YidC. Zn(2+) is required as a cofactor.

The protein localises to the cell inner membrane. The protein resides in the cytoplasm. It carries out the reaction ATP + H2O + cellular proteinSide 1 = ADP + phosphate + cellular proteinSide 2.. In terms of biological role, part of the Sec protein translocase complex. Interacts with the SecYEG preprotein conducting channel. Has a central role in coupling the hydrolysis of ATP to the transfer of proteins into and across the cell membrane, serving both as a receptor for the preprotein-SecB complex and as an ATP-driven molecular motor driving the stepwise translocation of polypeptide chains across the membrane. The chain is Protein translocase subunit SecA from Actinobacillus succinogenes (strain ATCC 55618 / DSM 22257 / CCUG 43843 / 130Z).